The chain runs to 748 residues: Antigen peptide transporter 1 (748 aa).

Residues 1–15 lie on the Cytoplasmic side of the membrane; sequence MASSRCPAPRGCRCL. The helical transmembrane segment at 16–36 threads the bilayer; sequence PGASLAWLGTVLLLLADWVLL. Topologically, residues 37-53 are lumenal; the sequence is RTALPRIFSLLVPTALP. Residues 54 to 76 traverse the membrane as a helical segment; it reads LLRVWAVGLSRWAVLWLGACGVL. The Cytoplasmic segment spans residues 77 to 92; sequence RATVGSKSENAGAQGW. Residues 93 to 113 traverse the membrane as a helical segment; sequence LAALKPLAAALGLALPGLALF. At 114–133 the chain is on the lumenal side; sequence RELISWGAPGSADSTRLLHW. A helical transmembrane segment spans residues 134 to 154; it reads GSHPTAFVVSYAAALPAAALW. At 155–186 the chain is on the cytoplasmic side; the sequence is HKLGSLWVPGGQGGSGNPVRRLLGCLGSETRR. A helical transmembrane segment spans residues 187–207; that stretch reads LSLFLVLVVLSSLGEMAIPFF. The region spanning 187-470 is the ABC transmembrane type-1 domain; the sequence is LSLFLVLVVL…LLSIYPRVQK (284 aa). At 208–227 the chain is on the lumenal side; it reads TGRLTDWILQDGSADTFTRN. The chain crosses the membrane as a helical span at residues 228–248; the sequence is LTLMSILTIASAVLEFVGDGI. The Cytoplasmic portion of the chain corresponds to 249 to 298; it reads YNNTMGHVHSHLQGEVFGAVLRQETEFFQQNQTGNIMSRVTEDTSTLSDS. A helical transmembrane segment spans residues 299-319; sequence LSENLSLFLWYLVRGLCLLGI. Residues 320–328 lie on the Lumenal side of the membrane; sequence MLWGSVSLT. The helical transmembrane segment at 329–349 threads the bilayer; the sequence is MVTLITLPLLFLLPKKVGKWY. The Cytoplasmic segment spans residues 350-418; it reads QLLEVQVRES…AVNSWTTSIS (69 aa). The part of the peptide-binding site stretch occupies residues 375-420; sequence PTVRSFANEEGEAQKFREKLQEIKTLNQKEAVAYAVNSWTTSISGM. Residues 419–439 form a helical membrane-spanning segment; the sequence is GMLLKVGILYIGGQLVTSGAV. Over 440-443 the chain is Lumenal; it reads SSGN. The chain crosses the membrane as a helical span at residues 444–464; sequence LVTFVLYQMQFTQAVEVLLSI. Residues 453–487 form a part of the peptide-binding site region; sequence QFTQAVEVLLSIYPRVQKAVGSSEKIFEYLDRTPR. Residues 465-748 are Cytoplasmic-facing; it reads YPRVQKAVGS…MVQAPADAPE (284 aa). Positions 503-742 constitute an ABC transporter domain; that stretch reads VQFQDVSFAY…KGCYWAMVQA (240 aa). ATP is bound by residues 538 to 546, 641 to 647, and Gln701; these read GPNGSGKST and SQLSGGQ. Mg(2+) is bound at residue Ser545.

This sequence belongs to the ABC transporter superfamily. ABCB family. MHC peptide exporter (TC 3.A.1.209) subfamily. In terms of assembly, heterodimer of TAP1 and TAP2 (TAP1-TAP2). A component of the peptide loading complex (PLC), interacts via TAPBP with MHCI heterodimer; this interaction mediates peptide-MHCI assembly. Recruits TAPBP in a 1:1 stoichiometry. Interacts with classical MHCI such as HLA-A*02-B2M; this interaction is obligatory for the loading of peptide epitopes. Interacts with non-classical MHCI molecules including HLA-E-B2M and HLA-F-B2M as well as PLC component CALR before the peptide loading. Interacts with PSMB5 and PSMB8. (Microbial infection) Interacts with Epstein-Barr virus BNLF2a. As to quaternary structure, (Microbial infection) Interacts with herpes simplex virus US12/ICP47. In terms of assembly, (Microbial infection) Interacts with adenovirus E3-19K glycoprotein, which binds TAP1-TAP2 and acts as a TAPBP inhibitor, preventing TAP1-TAP2 association with MHCI. Requires Mg(2+) as cofactor. Highly expressed in professional APCs monocytes and dendritic cells as well as in lymphocyte subsets T cells, B cells and NK cells.

It is found in the endoplasmic reticulum membrane. The catalysed reaction is a peptide antigen(in) + ATP + H2O = a peptide antigen(out) + ADP + phosphate + H(+). Its activity is regulated as follows. Inhibited at high ER lumenal peptide concentrations. With respect to regulation, (Microbial infection) Inhibited by herpes simplex virus US12/ICP47 protein, which blocks the peptide-binding site of TAP1-TAP2. (Microbial infection) Inhibited by human cytomegalovirus US6 glycoprotein, which binds to the lumenal side of TAP1-TAP2 complex and inhibits peptide translocation by specifically blocking ATP-binding and preventing TAP1-TAP2 conformational rearrangement induced by peptide binding. ABC transporter associated with antigen processing. In complex with TAP2 mediates unidirectional translocation of peptide antigens from cytosol to endoplasmic reticulum (ER) for loading onto MHC class I (MHCI) molecules. Uses the chemical energy of ATP to export peptides against the concentration gradient. During the transport cycle alternates between 'inward-facing' state with peptide binding site facing the cytosol to 'outward-facing' state with peptide binding site facing the ER lumen. Peptide antigen binding to ATP-loaded TAP1-TAP2 induces a switch to hydrolysis-competent 'outward-facing' conformation ready for peptide loading onto nascent MHCI molecules. Subsequently ATP hydrolysis resets the transporter to the 'inward facing' state for a new cycle. Typically transports intracellular peptide antigens of 8 to 13 amino acids that arise from cytosolic proteolysis via IFNG-induced immunoproteasome. Binds peptides with free N- and C-termini, the first three and the C-terminal residues being critical. Preferentially selects peptides having a highly hydrophobic residue at position 3 and hydrophobic or charged residues at the C-terminal anchor. Proline at position 2 has the most destabilizing effect. As a component of the peptide loading complex (PLC), acts as a molecular scaffold essential for peptide-MHCI assembly and antigen presentation. This Homo sapiens (Human) protein is Antigen peptide transporter 1.